The following is a 443-amino-acid chain: ATP-dependent protease ATPase subunit HslU (443 aa).

Residues isoleucine 20, glycine 62–glutamate 67, aspartate 255, glutamate 321, and arginine 393 contribute to the ATP site.

It belongs to the ClpX chaperone family. HslU subfamily. A double ring-shaped homohexamer of HslV is capped on each side by a ring-shaped HslU homohexamer. The assembly of the HslU/HslV complex is dependent on binding of ATP.

It is found in the cytoplasm. ATPase subunit of a proteasome-like degradation complex; this subunit has chaperone activity. The binding of ATP and its subsequent hydrolysis by HslU are essential for unfolding of protein substrates subsequently hydrolyzed by HslV. HslU recognizes the N-terminal part of its protein substrates and unfolds these before they are guided to HslV for hydrolysis. This is ATP-dependent protease ATPase subunit HslU from Helicobacter pylori (strain G27).